The sequence spans 728 residues: Phosphoribosylformylglycinamidine synthase subunit PurL (728 aa).

Residue histidine 42 is part of the active site. ATP contacts are provided by tyrosine 45 and lysine 84. Glutamate 86 serves as a coordination point for Mg(2+). Substrate is bound by residues 87 to 90 (SHNH) and arginine 109. The active-site Proton acceptor is histidine 88. Position 110 (aspartate 110) interacts with Mg(2+). Position 237 (glutamine 237) interacts with substrate. Aspartate 265 lines the Mg(2+) pocket. Residue 309-311 (ESQ) coordinates substrate. Residues aspartate 491 and glycine 528 each coordinate ATP. Asparagine 529 is a Mg(2+) binding site. Substrate is bound at residue serine 531.

The protein belongs to the FGAMS family. Monomer. Part of the FGAM synthase complex composed of 1 PurL, 1 PurQ and 2 PurS subunits.

It is found in the cytoplasm. It catalyses the reaction N(2)-formyl-N(1)-(5-phospho-beta-D-ribosyl)glycinamide + L-glutamine + ATP + H2O = 2-formamido-N(1)-(5-O-phospho-beta-D-ribosyl)acetamidine + L-glutamate + ADP + phosphate + H(+). Its pathway is purine metabolism; IMP biosynthesis via de novo pathway; 5-amino-1-(5-phospho-D-ribosyl)imidazole from N(2)-formyl-N(1)-(5-phospho-D-ribosyl)glycinamide: step 1/2. Functionally, part of the phosphoribosylformylglycinamidine synthase complex involved in the purines biosynthetic pathway. Catalyzes the ATP-dependent conversion of formylglycinamide ribonucleotide (FGAR) and glutamine to yield formylglycinamidine ribonucleotide (FGAM) and glutamate. The FGAM synthase complex is composed of three subunits. PurQ produces an ammonia molecule by converting glutamine to glutamate. PurL transfers the ammonia molecule to FGAR to form FGAM in an ATP-dependent manner. PurS interacts with PurQ and PurL and is thought to assist in the transfer of the ammonia molecule from PurQ to PurL. This is Phosphoribosylformylglycinamidine synthase subunit PurL from Campylobacter jejuni subsp. doylei (strain ATCC BAA-1458 / RM4099 / 269.97).